The primary structure comprises 85 residues: Cloacin immunity protein (85 aa).

At K12 the chain carries N6-methyllysine.

The protein belongs to the cloacin immunity protein family.

Functionally, this protein complexes with cloacin protein in equimolar amounts and inhibits it by binding with high affinity to the C-terminal catalytic domain of cloacin. This is Cloacin immunity protein (cim) from Escherichia coli.